The chain runs to 89 residues: Small cysteine-rich protein 1 (89 aa).

The N-terminal stretch at 1–20 (MDVRFRLCLFLVILVIVANA) is a signal peptide. Positions 21–27 (NVIKEPE) are excised as a propeptide.

It belongs to the Cnidaria small cysteine-rich protein (SCRiP) family. gamma subfamily. Contains 4 disulfide bonds.

Its subcellular location is the secreted. It is found in the nematocyst. In terms of biological role, induces neurotoxic symptoms on zebrafish. Has also been claimed to be implied in calcification, but tests on homolog proteins suggest that proteins of this family have a neurotoxic function and not a calcification function. The sequence is that of Small cysteine-rich protein 1 from Acropora millepora (Staghorn coral).